The following is a 294-amino-acid chain: Protease HtpX (294 aa).

The next 2 helical transmembrane spans lie at 4–24 (ILLF…ILFI) and 33–53 (FGLI…SLLL). His-139 provides a ligand contact to Zn(2+). Residue Glu-140 is part of the active site. Residue His-143 participates in Zn(2+) binding. The next 2 membrane-spanning stretches (helical) occupy residues 147-167 (GDMI…IFLS) and 197-217 (FFIS…ITFW). Glu-223 is a binding site for Zn(2+).

Belongs to the peptidase M48B family. Zn(2+) serves as cofactor.

The protein localises to the cell membrane. This chain is Protease HtpX, found in Wigglesworthia glossinidia brevipalpis.